Reading from the N-terminus, the 746-residue chain is Exostosin-1 (746 aa).

Residues 1–7 lie on the Cytoplasmic side of the membrane; it reads MQAKKRY. Residues 8–28 traverse the membrane as a helical; Signal-anchor for type II membrane protein segment; the sequence is FILLSAGSCLALLFYFGGVQF. At 29 to 746 the chain is on the lumenal side; it reads RASRSHSRRE…RKKYRDIERL (718 aa). Asparagine 89 is a glycosylation site (N-linked (GlcNAc...) asparagine). Intrachain disulfides connect cysteine 98–cysteine 103 and cysteine 109–cysteine 152. The a protein site is built by leucine 166 and tyrosine 203. 4 residues coordinate UDP: lysine 267, lysine 269, tyrosine 271, and arginine 280. Cysteines 298 and 312 form a disulfide. Residue histidine 300 participates in a protein binding. Residues tyrosine 319 and tyrosine 324 each contribute to the UDP site. Residue asparagine 330 is glycosylated (N-linked (GlcNAc...) asparagine). 2 disulfide bridges follow: cysteine 334–cysteine 355 and cysteine 652–cysteine 704. The UDP site is built by arginine 346 and glutamate 349.

Belongs to the glycosyltransferase 47 family. Part of the heparan sulfate polymerase, a dimeric complex composed of EXT1 and EXT2. Could also form homooligomeric complexes. Interacts with NDST1. In terms of processing, N-glycosylated.

It localises to the golgi apparatus membrane. The protein resides in the golgi apparatus. Its subcellular location is the cis-Golgi network membrane. The protein localises to the endoplasmic reticulum membrane. It carries out the reaction 3-O-{alpha-D-GlcNAc-[(1-&gt;4)-beta-D-GlcA-(1-&gt;4)-alpha-D-GlcNAc](n)-(1-&gt;4)-beta-D-GlcA-(1-&gt;3)-beta-D-Gal-(1-&gt;3)-beta-D-Gal-(1-&gt;4)-beta-D-Xyl}-L-seryl-[protein] + UDP-alpha-D-glucuronate = 3-O-{[(1-&gt;4)-beta-D-GlcA-(1-&gt;4)-alpha-D-GlcNAc](n+1)-(1-&gt;4)-beta-D-GlcA-(1-&gt;3)-beta-D-Gal-(1-&gt;3)-beta-D-Gal-(1-&gt;4)-beta-D-Xyl}-L-seryl-[protein] + UDP + H(+). It functions in the pathway protein modification; protein glycosylation. Functionally, glycosyltransferase forming with EXT2 the heterodimeric heparan sulfate polymerase which catalyzes the elongation of the heparan sulfate glycan backbone. Glycan backbone extension consists in the alternating transfer of (1-&gt;4)-beta-D-GlcA and (1-&gt;4)-alpha-D-GlcNAc residues from their respective UDP-sugar donors. Both EXT1 and EXT2 are required for the full activity of the polymerase since EXT1 bears the N-acetylglucosaminyl-proteoglycan 4-beta-glucuronosyltransferase activity within the complex while EXT2 carries the glucuronosyl-N-acetylglucosaminyl-proteoglycan 4-alpha-N-acetylglucosaminyltransferase activity. Heparan sulfate proteoglycans are ubiquitous components of the extracellular matrix and play an important role in tissue homeostasis and signaling. The polypeptide is Exostosin-1 (Mus musculus (Mouse)).